A 789-amino-acid chain; its full sequence is Spermatogenesis-associated protein 20 (789 aa).

Positions 1 to 19 (MSHHSPPPPKHKGEHKGHG) are enriched in basic residues. The tract at residues 1 to 65 (MSHHSPPPPK…CPPPAPQKTA (65 aa)) is disordered. 2 positions are modified to phosphoserine: serine 5 and serine 652.

In terms of tissue distribution, testis-specific and age-dependent (at protein level). Highly expressed. Expressed in round spermatids located in the inner half-layer of the seminiferous epithelium as well as in early elongated spermatids having cytoplasmic protrusions into the tubular lumen.

It localises to the secreted. In terms of biological role, may play a role in fertility regulation. The polypeptide is Spermatogenesis-associated protein 20 (Spata20) (Rattus norvegicus (Rat)).